The chain runs to 65 residues: Large ribosomal subunit protein bL28 (65 aa).

Residues 1 to 26 (MARRDALTGKSALSGQSRSHALNATK) are disordered. Residues 11 to 22 (SALSGQSRSHAL) are compositionally biased toward polar residues.

The protein belongs to the bacterial ribosomal protein bL28 family.

The sequence is that of Large ribosomal subunit protein bL28 from Mycoplasma mycoides subsp. mycoides SC (strain CCUG 32753 / NCTC 10114 / PG1).